Reading from the N-terminus, the 262-residue chain is Ankyrin repeat domain-containing protein 7 (262 aa).

5 ANK repeats span residues 67 to 96 (KYRT…KINI), 100 to 129 (ENKS…DPNL), 133 to 162 (RYNT…DLEA), 166 to 195 (DGYT…DVNA), and 199 to 228 (YQRT…ELSC).

This is Ankyrin repeat domain-containing protein 7 (ANKRD7) from Macaca fascicularis (Crab-eating macaque).